The chain runs to 292 residues: E3 ubiquitin-protein ligase trim-21 (292 aa).

The RING-type zinc-finger motif lies at 6 to 52; sequence CEICDDDFSSEEDGDHNPRNLKCSHTLCEGCIKKLLKNGRVVCPFCR. Residues 90–137 form a B box-type zinc finger; it reads NFPPKCVEHPYNVAEFACIESNCSSKNKLMCQTCEEFGAHKGHAKELL. The Zn(2+) site is built by cysteine 95, histidine 98, cysteine 123, and histidine 129. A coiled-coil region spans residues 152–179; it reads INQLKLNIQNCTVKKNELEEAVVKSEQL.

This sequence belongs to the TRIM/RBCC family. Interacts with E2 ubiquitin-conjugating enzyme ubc-21. Interacts with ced-6; this mediates interaction of trim-21 with ced-1 and is required for ced-1 ubiquitination. Interacts with nck-1; the interaction is required for ced-1 ubiquitination. In early larva, observed mainly in pharyngeal and body wall muscle cells.

It is found in the cytoplasm. The enzyme catalyses S-ubiquitinyl-[E2 ubiquitin-conjugating enzyme]-L-cysteine + [acceptor protein]-L-lysine = [E2 ubiquitin-conjugating enzyme]-L-cysteine + N(6)-ubiquitinyl-[acceptor protein]-L-lysine.. It functions in the pathway protein modification; protein ubiquitination. E3 ubiquitin-protein ligase which catalyzes 'Lys-48'-linked polyubiquitination of ced-1, promoting its proteasomal degradation to maintain appropriate ced-1 levels for apoptotic cell clearance. Acts together with E2 ubiquitin-conjugating enzyme ubc-21. The polypeptide is E3 ubiquitin-protein ligase trim-21 (Caenorhabditis elegans).